Consider the following 345-residue polypeptide: Large ribosomal subunit protein uL10 (345 aa).

Residues Ser303–Phe345 are disordered. Positions Pro305 to Glu318 are enriched in low complexity. Residues Ala319 to Pro332 show a composition bias toward basic and acidic residues.

It belongs to the universal ribosomal protein uL10 family. Part of the 50S ribosomal subunit. Forms part of the ribosomal stalk which helps the ribosome interact with GTP-bound translation factors. Forms a heptameric L10(L12)2(L12)2(L12)2 complex, where L10 forms an elongated spine to which the L12 dimers bind in a sequential fashion.

Its function is as follows. Forms part of the ribosomal stalk, playing a central role in the interaction of the ribosome with GTP-bound translation factors. The sequence is that of Large ribosomal subunit protein uL10 from Pyrobaculum aerophilum (strain ATCC 51768 / DSM 7523 / JCM 9630 / CIP 104966 / NBRC 100827 / IM2).